A 177-amino-acid polypeptide reads, in one-letter code: Cytochrome c-type biogenesis protein CcmE (177 aa).

Residues 1 to 7 lie on the Cytoplasmic side of the membrane; the sequence is MTRKSRR. The chain crosses the membrane as a helical; Signal-anchor for type II membrane protein span at residues 8 to 28; sequence LILIAACGAVLALALGLILSA. The Periplasmic segment spans residues 29 to 177; it reads MSGSIVFFRS…DATLGQRSER (149 aa). Residues His-122 and Tyr-126 each coordinate heme. Residues 133-177 are disordered; that stretch reads DALKAQGRWQEGGSKEAPKDASKAAPKDAAKPETADATLGQRSER. A compositionally biased stretch (basic and acidic residues) spans 145–166; that stretch reads GSKEAPKDASKAAPKDAAKPET.

Belongs to the CcmE/CycJ family.

It is found in the cell inner membrane. In terms of biological role, heme chaperone required for the biogenesis of c-type cytochromes. Transiently binds heme delivered by CcmC and transfers the heme to apo-cytochromes in a process facilitated by CcmF and CcmH. The chain is Cytochrome c-type biogenesis protein CcmE from Methylorubrum extorquens (strain PA1) (Methylobacterium extorquens).